Here is a 504-residue protein sequence, read N- to C-terminus: L-amino-acid oxidase (504 aa).

The first 18 residues, 1 to 18 (MNVFFMFSLLFLAALGSC), serve as a signal peptide directing secretion. Residues cysteine 28 and cysteine 191 are joined by a disulfide bond. FAD-binding positions include 61–62 (MS), 81–82 (EA), arginine 89, and 105–108 (GPMR). Arginine 108 contacts substrate. The N-linked (GlcNAc...) asparagine glycan is linked to asparagine 190. Residue histidine 241 participates in substrate binding. Valine 279 lines the FAD pocket. A disulfide bridge links cysteine 349 with cysteine 430. An N-linked (GlcNAc...) asparagine glycan is attached at asparagine 379. Residue tyrosine 390 participates in substrate binding. Residues glutamate 475 and 482–487 (GWIDST) contribute to the FAD site. 482 to 483 (GW) lines the substrate pocket.

Belongs to the flavin monoamine oxidase family. FIG1 subfamily. Homodimer; non-covalently linked. Requires FAD as cofactor. Expressed by the venom gland.

Its subcellular location is the secreted. It carries out the reaction an L-alpha-amino acid + O2 + H2O = a 2-oxocarboxylate + H2O2 + NH4(+). The catalysed reaction is L-leucine + O2 + H2O = 4-methyl-2-oxopentanoate + H2O2 + NH4(+). In terms of biological role, catalyzes an oxidative deamination of predominantly hydrophobic and aromatic L-amino acids, thus producing hydrogen peroxide that may contribute to the diverse toxic effects of this enzyme. Shows activity on L-Leu. Exhibits diverse biological activities, such as hemorrhage, hemolysis, edema, antibacterial and antiparasitic activities, as well as regulation of platelet aggregation. Its effect on platelets is controversial, since it either induces aggregation or inhibits agonist-induced aggregation. These different effects are probably due to different experimental conditions. This protein induces apoptosis of cultured HeLa cells. The chain is L-amino-acid oxidase from Gloydius halys (Chinese water mocassin).